The chain runs to 544 residues: Chaperonin GroEL (544 aa).

ATP is bound by residues T29–P32, K50, D86–T90, G413, D479–A481, and D495.

It belongs to the chaperonin (HSP60) family. As to quaternary structure, forms a cylinder of 14 subunits composed of two heptameric rings stacked back-to-back. Interacts with the co-chaperonin GroES.

It is found in the cytoplasm. The enzyme catalyses ATP + H2O + a folded polypeptide = ADP + phosphate + an unfolded polypeptide.. Together with its co-chaperonin GroES, plays an essential role in assisting protein folding. The GroEL-GroES system forms a nano-cage that allows encapsulation of the non-native substrate proteins and provides a physical environment optimized to promote and accelerate protein folding. The protein is Chaperonin GroEL of Borrelia turicatae (strain 91E135).